The chain runs to 473 residues: MKILYSQRRFYHVETLFNGTLALSGRDQETTGFAWWAGNARLINLSGKLLGAHVAHAGLIVFWAGAMNLFEVAHFVPEKPMYEQGLILLPHLATLGWGVGPGGEVIDTFPYFVSGVLHLISSAVLGFGGIYHALIGPETLEESFPFFGYVWKDKNKMTTILGIHLILLGAGAFLLVFKALYFGGIYDTWAPGGGDVRKITNLTLSPGVIFGYLLKSPFGGEGWIVSVDNLEDIIGGHVWLGSICIFGGIWHILTKPFAWARRALVWSGEAYLSYSLGAIAVFGFIACCFVWFNNTAYPSEFYGPTGPEASQAQAFTFLVRDQRLGANVGSAQGPTGLGKYLMRSPTGEIIFGGETMRFWDLRAPWLEPLRGPNGLDLSKLKKDIQPWQERRSAEYMTHAPLGSLNSVGGVATEINAVNYVSPRSWLATSHFVLGFFFFVGHLWHAGRARAAAAGFEKGIDRDFEPVLSMTPLN.

Positions 1 to 14 (MKILYSQRRFYHVE) are excised as a propeptide. The residue at position 15 (threonine 15) is an N-acetylthreonine. Phosphothreonine is present on threonine 15. A run of 5 helical transmembrane segments spans residues 69-93 (LFEV…PHLA), 134-155 (LIGP…KDKN), 178-200 (KALY…RKIT), 255-275 (KPFA…LSYS), and 291-312 (WFNN…ASQA). Residue glutamate 367 coordinates [CaMn4O5] cluster. The chain crosses the membrane as a helical span at residues 447–471 (RARAAAAGFEKGIDRDFEPVLSMTP).

Belongs to the PsbB/PsbC family. PsbC subfamily. PSII is composed of 1 copy each of membrane proteins PsbA, PsbB, PsbC, PsbD, PsbE, PsbF, PsbH, PsbI, PsbJ, PsbK, PsbL, PsbM, PsbT, PsbX, PsbY, PsbZ, Psb30/Ycf12, at least 3 peripheral proteins of the oxygen-evolving complex and a large number of cofactors. It forms dimeric complexes. Binds multiple chlorophylls and provides some of the ligands for the Ca-4Mn-5O cluster of the oxygen-evolving complex. It may also provide a ligand for a Cl- that is required for oxygen evolution. PSII binds additional chlorophylls, carotenoids and specific lipids. is required as a cofactor.

Its subcellular location is the plastid. The protein resides in the chloroplast thylakoid membrane. Its function is as follows. One of the components of the core complex of photosystem II (PSII). It binds chlorophyll and helps catalyze the primary light-induced photochemical processes of PSII. PSII is a light-driven water:plastoquinone oxidoreductase, using light energy to abstract electrons from H(2)O, generating O(2) and a proton gradient subsequently used for ATP formation. The polypeptide is Photosystem II CP43 reaction center protein (Physcomitrium patens (Spreading-leaved earth moss)).